Here is a 249-residue protein sequence, read N- to C-terminus: 3-deoxy-D-manno-octulosonic acid kinase (249 aa).

Residue aspartate 175 is part of the active site.

Belongs to the protein kinase superfamily. KdkA/RfaP family.

The protein resides in the cell inner membrane. The catalysed reaction is an alpha-Kdo-(2-&gt;6)-lipid IVA + ATP = a 4-O-phospho-alpha-Kdo-(2-&gt;6)-lipid IVA + ADP + H(+). It functions in the pathway bacterial outer membrane biogenesis; LPS core biosynthesis. Its function is as follows. Catalyzes the ATP-dependent phosphorylation of the 3-deoxy-D-manno-octulosonic acid (Kdo) residue in Kdo-lipid IV(A) at the 4-OH position. The polypeptide is 3-deoxy-D-manno-octulosonic acid kinase (Xanthomonas campestris pv. campestris (strain 8004)).